A 616-amino-acid chain; its full sequence is MGKIIGIDLGTTNSCVAVLEGGESVVIPNKEGARTTPSVVGFSKTGERLVGQVAKRQAITNPDRTVISIKRHMGTDYKVKIDDKNYTPQEISAMILQKLKADAEAYLGEPVTQAVITVPAYFTDSQRQATKDAGAIAGLEVMRIINEPTAAALAYGIDKGEDQTILVYDLGGGTFDVSILELGDGLFEVKATSGNNRLGGDDFDEKIINWMIAEFKKETGVDLRGDKMAMQRLKEAAEKAKIELSGVMSTNINLPFITATADGPQHLDMTLTRAKFDELTADLVEMTMGPTRQALQDAKLEPKDIDKVILVGGSSRIPAVQEAIRKYLGKEPFKGINPDEVVAMGAAIQAGVLGGEVKGIVLADVTPLSLGIETLGGICTVLIPRNTTIPTSKSETFTTAADNQTSVEVHVLQGERKLASQNKTLGRFHLSGIAPAPRGIPQIEVKFDIDANGIVHVSAKDKATGNEQKITITASTGLSKEEIERMIKDAELHAEEDRKRQEEVEIRNQADSMVYQAEKTLKDLGDKAEAADKAKIESAKEELKKALEGTDMEEIKKKTEALTTVVYELSTKLYQQASAPGAGPEGASGGFGGENKKDDNVVDADYTVIDDDKKKT.

Position 174 is a phosphothreonine; by autocatalysis (T174). Residues 576–616 (QASAPGAGPEGASGGFGGENKKDDNVVDADYTVIDDDKKKT) are disordered. Residues 583–593 (GPEGASGGFGG) are compositionally biased toward gly residues.

The protein belongs to the heat shock protein 70 family.

Functionally, acts as a chaperone. In Heliobacterium modesticaldum (strain ATCC 51547 / Ice1), this protein is Chaperone protein DnaK.